A 59-amino-acid polypeptide reads, in one-letter code: UPF0434 protein VS_2060 (59 aa).

The protein belongs to the UPF0434 family.

This Vibrio atlanticus (strain LGP32) (Vibrio splendidus (strain Mel32)) protein is UPF0434 protein VS_2060.